The sequence spans 171 residues: Translationally-controlled tumor protein homolog (171 aa).

The 171-residue stretch at 1–171 folds into the TCTP domain; the sequence is MIIYKDIITG…FKDGLEIEKC (171 aa).

This sequence belongs to the TCTP family.

The protein localises to the cytoplasm. In terms of biological role, involved in calcium binding and microtubule stabilization. The sequence is that of Translationally-controlled tumor protein homolog (tpt1) from Labeo rohita (Indian major carp).